We begin with the raw amino-acid sequence, 59 residues long: Chromatin protein Cren7 (59 aa).

The protein belongs to the Cren7 family. Monomer. Methylated at multiple sites, to varying extents.

Its subcellular location is the chromosome. It is found in the cytoplasm. Functionally, a chromatin protein, binds double-stranded DNA without sequence specificity. Constrains negative DNA supercoils. The protein is Chromatin protein Cren7 of Pyrobaculum neutrophilum (strain DSM 2338 / JCM 9278 / NBRC 100436 / V24Sta) (Thermoproteus neutrophilus).